A 212-amino-acid polypeptide reads, in one-letter code: Small ribosomal subunit protein eS1 (212 aa).

The protein belongs to the eukaryotic ribosomal protein eS1 family.

This is Small ribosomal subunit protein eS1 from Haloquadratum walsbyi (strain DSM 16790 / HBSQ001).